Here is an 880-residue protein sequence, read N- to C-terminus: 3-isopropylmalate dehydratase large subunit gloJ (880 aa).

[4Fe-4S] cluster is bound by residues Cys457, Cys520, and Cys523.

This sequence belongs to the aconitase/IPM isomerase family. LeuC type 2 subfamily. [4Fe-4S] cluster is required as a cofactor.

It catalyses the reaction (2R,3S)-3-isopropylmalate = (2S)-2-isopropylmalate. The protein operates within mycotoxin biosynthesis. 3-isopropylmalate dehydratase large subunit; part of the gene cluster that mediates the biosynthesis of pneumocandins, lipohexapeptides of the echinocandin family that prevent fungal cell wall formation by non-competitive inhibition of beta-1,3-glucan synthase. The 10,12-dimethylmyristoyl side chain is synthesized by the reducing polyketide synthase gloL/GLPKS4. The thioesterase gloN/GLHYD exclusively interacts with gloL/GLPKS4 to maintain turnover of the polyketide side chain. The 10R,12S-dimethylmyristic acid is then transferred to the first thiolation domain of the nonribosomal peptide synthetase gloA/GLNRPS4 by the acyl-AMP ligase gloD/GLligase, followed by its acylation to L-ornithine to trigger elongation of the cyclic hexapeptide. L-ornithine, 4R-hydroxyl-L-proline (generated from L-proline by the dioxygenase gloF/GLOXY2), 3S-hydroxyl-L-homotyrosine (generated by gloG/GLHtyB, gloH/GLHtyA, gloI/GLHtyC, gloJ/GLHtyD and hydroxylated at C-3 by the dioxygenase gloM/GLOXY1), 3R-hydroxyl-L-glutamine (generated from L-glutamine probably by the dioxygenase gloE/GLOXY3) and 3S-hydroxyl-L-proline (generated from L-proline by the dioxygenase gloF/GLOXY2 to yield pneumocandin B0), or 3S-hydroxyl-4S-methyl-L-proline (generated from L-leucine by the dioxygenase gloC/GLOXY4 to yield pneumocandin A0) are sequentially added to the growing chain. The last C domain of gloA/GLNRPS4 is proposed to be responsible for cyclization by condensation to form the peptide bond between L-ornithine and 3S-hydroxyl-4S-methyl-L-proline (for pneumocandin A0) or 3S-hydroxyl-L-proline (for pneumocandin B0). Finally, the subsequent C-4 hydroxylation of 3S-hydroxyl-L-homotyrosine and L-ornithine dihydroxylation at C-4 and C-5 are performed by the cytochrome P450 monooxygenases gloP/GLP450-1 and gloO/GLP450-2, respectively. The protein is 3-isopropylmalate dehydratase large subunit gloJ of Glarea lozoyensis (strain ATCC 20868 / MF5171).